Reading from the N-terminus, the 216-residue chain is Octanoyltransferase (216 aa).

Positions 34 to 209 (ENTIDEIWLV…KMNQQLDYSH (176 aa)) constitute a BPL/LPL catalytic domain. Substrate is bound by residues 73-80 (RGGQITFH), 140-142 (SLG), and 153-155 (GLA). Cys-171 serves as the catalytic Acyl-thioester intermediate.

This sequence belongs to the LipB family.

Its subcellular location is the cytoplasm. It catalyses the reaction octanoyl-[ACP] + L-lysyl-[protein] = N(6)-octanoyl-L-lysyl-[protein] + holo-[ACP] + H(+). It participates in protein modification; protein lipoylation via endogenous pathway; protein N(6)-(lipoyl)lysine from octanoyl-[acyl-carrier-protein]: step 1/2. Catalyzes the transfer of endogenously produced octanoic acid from octanoyl-acyl-carrier-protein onto the lipoyl domains of lipoate-dependent enzymes. Lipoyl-ACP can also act as a substrate although octanoyl-ACP is likely to be the physiological substrate. This Psychromonas ingrahamii (strain DSM 17664 / CCUG 51855 / 37) protein is Octanoyltransferase.